A 1700-amino-acid chain; its full sequence is Probable serine/threonine-protein kinase ifkC (1700 aa).

The segment at 1 to 25 (MPPKPKQKAKQPSQQPPPPPPPAAA) is disordered. Over residues 14–23 (QQPPPPPPPA) the composition is skewed to pro residues. The region spanning 74-197 (MELEALQAIF…EIAKDFLNEN (124 aa)) is the RWD domain. Over residues 454–463 (GLKKSPSTFE) the composition is skewed to polar residues. Residues 454–488 (GLKKSPSTFEYSGEGGGGGVGGGSSQKTINPHQQS) form a disordered region. The segment covering 466–477 (GEGGGGGVGGGS) has biased composition (gly residues). The segment covering 479–488 (QKTINPHQQS) has biased composition (polar residues). Positions 494–1027 (FEEIQLLGRG…AQQLLQSELM (534 aa)) constitute a Protein kinase domain. ATP contacts are provided by residues 500-508 (LGRGGFGQV) and Lys523. Disordered stretches follow at residues 568–639 (LTND…ENND) and 689–760 (GNNT…SSSK). The span at 572–639 (NSDDDDDDDD…SEFESEENND (68 aa)) shows a compositional bias: acidic residues. Residues 697–735 (SSNQHLQQQQQQNQSQQQKKQPQQNQSQQQKKLKNSNSK) show a composition bias toward low complexity. Residues 736–752 (SKSKSKSKSKSKSKSNS) are compositionally biased toward basic residues. The active-site Proton acceptor is the Asp822. 4 stretches are compositionally biased toward low complexity: residues 850-875 (TSTL…SSNS), 1135-1158 (NNSS…NTNS), 1230-1240 (SSNGNSNNNNS), and 1509-1531 (NNSN…SYNN). Disordered regions lie at residues 850 to 901 (TSTL…EVEG), 1134 to 1160 (FNNS…NSVV), 1216 to 1253 (KHHH…SNTT), and 1507 to 1531 (NLNN…SYNN).

Belongs to the protein kinase superfamily. Ser/Thr protein kinase family. GCN2 subfamily.

The catalysed reaction is L-seryl-[protein] + ATP = O-phospho-L-seryl-[protein] + ADP + H(+). It catalyses the reaction L-threonyl-[protein] + ATP = O-phospho-L-threonyl-[protein] + ADP + H(+). The protein is Probable serine/threonine-protein kinase ifkC (ifkC) of Dictyostelium discoideum (Social amoeba).